We begin with the raw amino-acid sequence, 313 residues long: Ribosomal RNA small subunit methyltransferase H (313 aa).

S-adenosyl-L-methionine is bound by residues 37 to 39 (GGH), Asp57, Phe83, Asp104, and Gln111.

It belongs to the methyltransferase superfamily. RsmH family.

The protein localises to the cytoplasm. The catalysed reaction is cytidine(1402) in 16S rRNA + S-adenosyl-L-methionine = N(4)-methylcytidine(1402) in 16S rRNA + S-adenosyl-L-homocysteine + H(+). Specifically methylates the N4 position of cytidine in position 1402 (C1402) of 16S rRNA. This chain is Ribosomal RNA small subunit methyltransferase H, found in Mycoplasmoides gallisepticum (strain R(low / passage 15 / clone 2)) (Mycoplasma gallisepticum).